The following is a 244-amino-acid chain: Protein DCG1 (244 aa).

This sequence belongs to the HyuE racemase family.

This is Protein DCG1 (DCG1) from Saccharomyces cerevisiae (strain ATCC 204508 / S288c) (Baker's yeast).